A 126-amino-acid chain; its full sequence is Histone H2B type 1-B (126 aa).

Over residues 1–12 (MPEPSKSAPAPK) the composition is skewed to low complexity. The tract at residues 1–36 (MPEPSKSAPAPKKGSKKAISKAQKKDGKKRKRSRKE) is disordered. N-acetylproline is present on proline 2. The residue at position 3 (glutamate 3) is an ADP-ribosyl glutamic acid. N6-(2-hydroxyisobutyryl)lysine; alternate is present on lysine 6. N6-(beta-hydroxybutyryl)lysine; alternate is present on lysine 6. Lysine 6 carries the N6-acetyllysine; alternate modification. Lysine 6 is subject to N6-butyryllysine; alternate. At lysine 6 the chain carries N6-crotonyllysine; alternate. Lysine 6 carries the N6-lactoyllysine; alternate modification. Lysine 6 participates in a covalent cross-link: Glycyl lysine isopeptide (Lys-Gly) (interchain with G-Cter in SUMO2); alternate. The residue at position 7 (serine 7) is an ADP-ribosylserine. N6-(beta-hydroxybutyryl)lysine; alternate is present on lysine 12. Residues lysine 12 and lysine 13 each carry the N6-acetyllysine; alternate modification. N6-crotonyllysine; alternate occurs at positions 12 and 13. Lysine 12 is modified (N6-lactoyllysine; alternate). N6-(2-hydroxyisobutyryl)lysine; alternate is present on lysine 13. Residue serine 15 is modified to Phosphoserine; by STK4/MST1. Lysine 16, lysine 17, lysine 21, and lysine 24 each carry N6-acetyllysine; alternate. N6-crotonyllysine; alternate occurs at positions 16, 17, 21, and 24. Lysine 16, lysine 17, lysine 21, and lysine 24 each carry N6-lactoyllysine; alternate. Lysine 17 carries the post-translational modification N6-glutaryllysine; alternate. N6-(2-hydroxyisobutyryl)lysine; alternate is present on residues lysine 21 and lysine 24. Lysine 21 carries the N6-(beta-hydroxybutyryl)lysine; alternate modification. Position 21 is an N6-butyryllysine; alternate (lysine 21). Lysine 21 is covalently cross-linked (Glycyl lysine isopeptide (Lys-Gly) (interchain with G-Cter in SUMO2); alternate). Lysine 25 carries the N6-(2-hydroxyisobutyryl)lysine modification. Residue lysine 35 is modified to N6-(2-hydroxyisobutyryl)lysine; alternate. Residue lysine 35 is modified to N6-(beta-hydroxybutyryl)lysine; alternate. N6-crotonyllysine; alternate is present on lysine 35. An N6-glutaryllysine; alternate modification is found at lysine 35. Lysine 35 is subject to N6-succinyllysine; alternate. Lysine 35 participates in a covalent cross-link: Glycyl lysine isopeptide (Lys-Gly) (interchain with G-Cter in ubiquitin); alternate. Glutamate 36 carries the polyADP-ribosyl glutamic acid modification. Serine 37 is subject to Phosphoserine; by AMPK. N6-(2-hydroxyisobutyryl)lysine; alternate occurs at positions 44, 47, and 58. Lysine 44 carries the post-translational modification N6-lactoyllysine; alternate. 2 positions are modified to N6-glutaryllysine; alternate: lysine 44 and lysine 47. Lysine 47 is modified (N6-methyllysine; alternate). Lysine 58 bears the N6,N6-dimethyllysine; alternate mark. The residue at position 80 (arginine 80) is a Dimethylated arginine. Lysine 86 is modified (N6-(2-hydroxyisobutyryl)lysine; alternate). Residue lysine 86 is modified to N6-acetyllysine; alternate. Lysine 86 carries the N6-lactoyllysine; alternate modification. Lysine 86 carries the post-translational modification N6,N6,N6-trimethyllysine; alternate. An omega-N-methylarginine mark is found at arginine 87 and arginine 93. Lysine 109 carries the N6-(2-hydroxyisobutyryl)lysine; alternate modification. Lysine 109 carries the post-translational modification N6-(beta-hydroxybutyryl)lysine; alternate. Lysine 109 carries the N6-lactoyllysine; alternate modification. The residue at position 109 (lysine 109) is an N6-glutaryllysine; alternate. Position 109 is an N6-methyllysine; alternate (lysine 109). The O-linked (GlcNAc) serine glycan is linked to serine 113. Threonine 116 is subject to Phosphothreonine. Residues lysine 117 and lysine 121 each carry the N6-(2-hydroxyisobutyryl)lysine; alternate modification. Lysine 117 is modified (N6-(beta-hydroxybutyryl)lysine; alternate). N6-lactoyllysine; alternate is present on residues lysine 117 and lysine 121. N6-glutaryllysine; alternate occurs at positions 117 and 121. Residues lysine 117 and lysine 121 each carry the N6-succinyllysine; alternate modification. Lysine 117 is modified (N6-methylated lysine; alternate). Residue lysine 121 forms a Glycyl lysine isopeptide (Lys-Gly) (interchain with G-Cter in ubiquitin); alternate linkage.

The protein belongs to the histone H2B family. As to quaternary structure, the nucleosome is a histone octamer containing two molecules each of H2A, H2B, H3 and H4 assembled in one H3-H4 heterotetramer and two H2A-H2B heterodimers. The octamer wraps approximately 147 bp of DNA. Post-translationally, monoubiquitination at Lys-35 (H2BK34Ub) by the MSL1/MSL2 dimer is required for histone H3 'Lys-4' (H3K4me) and 'Lys-79' (H3K79me) methylation and transcription activation at specific gene loci, such as HOXA9 and MEIS1 loci. Similarly, monoubiquitination at Lys-121 (H2BK120Ub) by the RNF20/40 complex gives a specific tag for epigenetic transcriptional activation and is also prerequisite for histone H3 'Lys-4' and 'Lys-79' methylation. It also functions cooperatively with the FACT dimer to stimulate elongation by RNA polymerase II. H2BK120Ub also acts as a regulator of mRNA splicing: deubiquitination by USP49 is required for efficient cotranscriptional splicing of a large set of exons. In terms of processing, phosphorylated on Ser-15 (H2BS14ph) by STK4/MST1 during apoptosis; which facilitates apoptotic chromatin condensation. Also phosphorylated on Ser-15 in response to DNA double strand breaks (DSBs), and in correlation with somatic hypermutation and immunoglobulin class-switch recombination. Phosphorylation at Ser-37 (H2BS36ph) by AMPK in response to stress promotes transcription. GlcNAcylation at Ser-113 promotes monoubiquitination of Lys-121. It fluctuates in response to extracellular glucose, and associates with transcribed genes. Post-translationally, ADP-ribosylated by PARP1 or PARP2 on Ser-7 (H2BS6ADPr) in response to DNA damage. H2BS6ADPr promotes recruitment of CHD1L. Mono-ADP-ribosylated on Glu-3 (H2BE2ADPr) by PARP3 in response to single-strand breaks. Poly ADP-ribosylation on Glu-36 (H2BE35ADPr) by PARP1 regulates adipogenesis: it inhibits phosphorylation at Ser-37 (H2BS36ph), thereby blocking expression of pro-adipogenetic genes. In terms of processing, hydroxybutyrylation of histones is induced by starvation. Crotonylation (Kcr) is specifically present in male germ cells and marks testis-specific genes in post-meiotic cells, including X-linked genes that escape sex chromosome inactivation in haploid cells. Crotonylation marks active promoters and enhancers and confers resistance to transcriptional repressors. It is also associated with post-meiotically activated genes on autosomes. Post-translationally, lactylated in macrophages by EP300/P300 by using lactoyl-CoA directly derived from endogenous or exogenous lactate, leading to stimulates gene transcription.

It is found in the nucleus. Its subcellular location is the chromosome. Functionally, core component of nucleosome. Nucleosomes wrap and compact DNA into chromatin, limiting DNA accessibility to the cellular machineries which require DNA as a template. Histones thereby play a central role in transcription regulation, DNA repair, DNA replication and chromosomal stability. DNA accessibility is regulated via a complex set of post-translational modifications of histones, also called histone code, and nucleosome remodeling. The protein is Histone H2B type 1-B of Mus musculus (Mouse).